We begin with the raw amino-acid sequence, 473 residues long: Photosystem II CP43 reaction center protein (473 aa).

The propeptide occupies 1–14; the sequence is MKILYSLRRFYHVE. T15 bears the N-acetylthreonine mark. T15 carries the phosphothreonine modification. 5 helical membrane passes run 69-93, 134-155, 178-200, 255-275, and 291-312; these read LFEV…PHLA, LLGP…KDRN, KALY…RKIT, KPFA…LSYS, and WFNN…ASQA. E367 is a binding site for [CaMn4O5] cluster. Residues 447–471 form a helical membrane-spanning segment; the sequence is RARAAAAGFEKGIDRDLEPVLYMNP.

It belongs to the PsbB/PsbC family. PsbC subfamily. In terms of assembly, PSII is composed of 1 copy each of membrane proteins PsbA, PsbB, PsbC, PsbD, PsbE, PsbF, PsbH, PsbI, PsbJ, PsbK, PsbL, PsbM, PsbT, PsbX, PsbY, PsbZ, Psb30/Ycf12, at least 3 peripheral proteins of the oxygen-evolving complex and a large number of cofactors. It forms dimeric complexes. Binds multiple chlorophylls and provides some of the ligands for the Ca-4Mn-5O cluster of the oxygen-evolving complex. It may also provide a ligand for a Cl- that is required for oxygen evolution. PSII binds additional chlorophylls, carotenoids and specific lipids. serves as cofactor.

It localises to the plastid. The protein resides in the chloroplast thylakoid membrane. In terms of biological role, one of the components of the core complex of photosystem II (PSII). It binds chlorophyll and helps catalyze the primary light-induced photochemical processes of PSII. PSII is a light-driven water:plastoquinone oxidoreductase, using light energy to abstract electrons from H(2)O, generating O(2) and a proton gradient subsequently used for ATP formation. This Hordeum vulgare (Barley) protein is Photosystem II CP43 reaction center protein.